A 342-amino-acid chain; its full sequence is D-erythrose-4-phosphate dehydrogenase (342 aa).

11–12 (RV) contacts NAD(+). Substrate contacts are provided by residues 153–155 (SCT), arginine 199, 212–213 (TK), and arginine 235. The active-site Nucleophile is cysteine 154. An NAD(+)-binding site is contributed by asparagine 317.

This sequence belongs to the glyceraldehyde-3-phosphate dehydrogenase family. Epd subfamily. Homotetramer.

Its subcellular location is the cytoplasm. It catalyses the reaction D-erythrose 4-phosphate + NAD(+) + H2O = 4-phospho-D-erythronate + NADH + 2 H(+). The protein operates within cofactor biosynthesis; pyridoxine 5'-phosphate biosynthesis; pyridoxine 5'-phosphate from D-erythrose 4-phosphate: step 1/5. In terms of biological role, catalyzes the NAD-dependent conversion of D-erythrose 4-phosphate to 4-phosphoerythronate. This is D-erythrose-4-phosphate dehydrogenase from Pseudoalteromonas atlantica (strain T6c / ATCC BAA-1087).